Reading from the N-terminus, the 636-residue chain is DNA mismatch repair protein MutL (636 aa).

Residues 332–344 show a composition bias toward basic and acidic residues; it reads HAGEQGDSLRTDI. Disordered regions lie at residues 332-360 and 417-443; these read HAGEQGDSLRTDIADAPEQPGATATPADN and ASAPADAAPAQASEPAAAPQADDSDDA. Residues 417-437 are compositionally biased toward low complexity; the sequence is ASAPADAAPAQASEPAAAPQA.

This sequence belongs to the DNA mismatch repair MutL/HexB family.

In terms of biological role, this protein is involved in the repair of mismatches in DNA. It is required for dam-dependent methyl-directed DNA mismatch repair. May act as a 'molecular matchmaker', a protein that promotes the formation of a stable complex between two or more DNA-binding proteins in an ATP-dependent manner without itself being part of a final effector complex. In Ralstonia nicotianae (strain ATCC BAA-1114 / GMI1000) (Ralstonia solanacearum), this protein is DNA mismatch repair protein MutL.